The chain runs to 542 residues: Calcium-dependent protein kinase 15 (542 aa).

Residues 1–73 (MGARASRHRQ…QAPQQAAAED (73 aa)) form a disordered region. Glycine 2 carries N-myristoyl glycine lipidation. A compositionally biased stretch (low complexity) spans 12–21 (PDQSQSQSPS). Basic residues predominate over residues 22 to 40 (PHHKHHHHHQTTRAPKPKP). Residues 41–60 (KPQPPPPQQPRSQPPPPPRH) are compositionally biased toward pro residues. The span at 61-71 (QPQQAPQQAAA) shows a compositional bias: low complexity. Residues 90–348 (YTFGRELGRG…AAEILNHPWI (259 aa)) enclose the Protein kinase domain. Residues 96 to 104 (LGRGQFGVT) and lysine 119 each bind ATP. Aspartate 214 functions as the Proton acceptor in the catalytic mechanism. Residues 354–384 (APDKPLDITVISRMKQFRAMNKLKKVALKVV) form an autoinhibitory domain region. 4 consecutive EF-hand domains span residues 391 to 426 (EEIV…LGTK), 427 to 462 (ISES…MNRL), 463 to 497 (EKED…KYDM), and 498 to 533 (GDEA…NSPE). Ca(2+) is bound by residues aspartate 404, aspartate 406, serine 408, threonine 410, glutamate 415, aspartate 440, aspartate 442, asparagine 444, serine 446, glutamate 451, aspartate 476, aspartate 478, serine 480, glutamate 487, aspartate 511, aspartate 513, aspartate 515, arginine 517, and glutamate 522.

This sequence belongs to the protein kinase superfamily. Ser/Thr protein kinase family. CDPK subfamily.

The protein localises to the membrane. The enzyme catalyses L-seryl-[protein] + ATP = O-phospho-L-seryl-[protein] + ADP + H(+). It carries out the reaction L-threonyl-[protein] + ATP = O-phospho-L-threonyl-[protein] + ADP + H(+). With respect to regulation, activated by calcium. Autophosphorylation may play an important role in the regulation of the kinase activity. In terms of biological role, may play a role in signal transduction pathways that involve calcium as a second messenger. The polypeptide is Calcium-dependent protein kinase 15 (Oryza sativa subsp. japonica (Rice)).